The chain runs to 785 residues: Potassium transporter 5 (785 aa).

Residues Met1–Ser60 are Cytoplasmic-facing. Ser35 is subject to Phosphoserine. Residues Leu61–Tyr81 traverse the membrane as a helical segment. At Ala82–Gly97 the chain is on the extracellular side. A helical transmembrane segment spans residues Val98–Val118. At Leu119–Lys184 the chain is on the cytoplasmic side. A helical transmembrane segment spans residues Ile185 to Thr205. Residues Pro206–Lys218 are Extracellular-facing. A helical transmembrane segment spans residues Ser219–Phe239. The Cytoplasmic portion of the chain corresponds to Gln240–Val247. A helical transmembrane segment spans residues Gly248–Phe268. Residues Asn269 to Gly297 lie on the Extracellular side of the membrane. A helical membrane pass occupies residues Trp298 to Leu318. The Cytoplasmic segment spans residues Gly319–Gln327. A helical transmembrane segment spans residues Ile328–Tyr348. The Extracellular segment spans residues Leu349–Pro367. A glycan (N-linked (GlcNAc...) asparagine) is linked at Asn355. A helical transmembrane segment spans residues Leu368–Ile388. At Ser389–Gln419 the chain is on the cytoplasmic side. A helical membrane pass occupies residues Val420 to Phe440. The Extracellular segment spans residues Arg441–Gly451. Residues Ile452–Ile472 traverse the membrane as a helical segment. The Cytoplasmic segment spans residues Trp473 to Asn476. The helical transmembrane segment at Ile477–Ser497 threads the bilayer. Over Val498–Lys501 the chain is Extracellular. Residues Phe502–Ile522 traverse the membrane as a helical segment. The Cytoplasmic portion of the chain corresponds to Trp523–Leu785. Positions Gly660 to Ser699 are disordered. Residues Glu662–Asn673 show a composition bias toward acidic residues. The segment covering Ala674–Pro686 has biased composition (polar residues). Residues Ser687 to Ser697 are compositionally biased toward low complexity.

It belongs to the HAK/KUP transporter (TC 2.A.72.3) family. Interacts with ILK1. Phosphorylated at the N-terminus (amino acids 1-95) by CIPK23. Predominantly expressed in the roots.

It localises to the cell membrane. Its function is as follows. High-affinity potassium transporter. Can also transport rubidium and cesium. Is essential with AKT1 for high-affinity potassium uptake in roots during seedling establishment and postgermination growth under low potassium conditions. Mediates potassium uptake by plant roots in response to low potassium conditions, by a calcium-, CBL-, and CIPK-dependent pathway. Positively regulated by the calcium sensors calcineurin B-like genes CBL1, CBL8, CBL9 and CBL10, and by phosphorylation by CIPK23. This is Potassium transporter 5 (POT5) from Arabidopsis thaliana (Mouse-ear cress).